A 151-amino-acid chain; its full sequence is Small ribosomal subunit protein uS15 (151 aa).

Belongs to the universal ribosomal protein uS15 family.

The sequence is that of Small ribosomal subunit protein uS15 (RpS13) from Plutella xylostella (Diamondback moth).